The chain runs to 408 residues: Methyltransferase/ribosomally synthesized type I borosin cyclic peptide precursor sveMA (408 aa).

Residues 1–250 form a methyltransferase domain region; sequence MASSTHPKRG…TSSTFYIPPR (250 aa). Residues R73, Y77, and Y99 contribute to the active site. 8 residues coordinate S-adenosyl-L-methionine: Y99, H101, I104, A131, Q173, G211, S242, and T244. The tract at residues 251–375 is clasp domain; it reads DSEAIDYDMV…GSVYKVMSAT (125 aa). Positions 371–385 are precursor leader; that stretch reads VMSATQADIELGKEP. At V401 the chain carries N-methylvaline. N-methylisoleucine is present on I402. N-methylvaline is present on V406.

In the N-terminal section; belongs to the precorrin methyltransferase family. Homodimer. Post-translationally, sveMA automethylates at Val-401, Ile-402 and Val-406 before being processed by a prolyloligopeptidase which likely forms a peptidyl ester upon removal of the follower propeptide, which then undergoes macrocyclization with the N-terminus of the modified core peptide. Peptide backbone alpha-N-methylations change the physicochemical properties of amide bonds to provide structural constraints and other favorable characteristics including biological membrane permeability to peptides.

It participates in secondary metabolite biosynthesis. Fusion protein of the methyltransferase sveM and a type I borosin core peptide; part of the gene cluster that mediates the biosynthesis of a type I borosin, a highly methylated cyclic peptide with potent biological activities. Type I borosins derive from the C-terminus of the fusion protein, and it is the same protein that methylates its own C-terminus using S-adenosyl methionine (SAM). The C-terminus is subsequently cleaved off and macrocyclized by a prolyloligopeptidase to give the final product. This Serendipita vermifera subsp. bescii (Mycorrhizal fungus) protein is Methyltransferase/ribosomally synthesized type I borosin cyclic peptide precursor sveMA.